Reading from the N-terminus, the 1765-residue chain is Autophagy-related protein 2 (1765 aa).

Disordered stretches follow at residues 218-243 (SGEG…EDYD), 1188-1224 (GGSE…SHNI), and 1746-1765 (DPEE…KEAG). The segment covering 226–243 (DNSEERDETESEESEDYD) has biased composition (acidic residues). Positions 1188-1206 (GGSENVSEHNNLSPGSSSP) are enriched in polar residues. The segment covering 1207–1221 (ASVNTANSTRSAASS) has biased composition (low complexity). Over residues 1747–1765 (PEEKRRSEEKYKNTKKEAG) the composition is skewed to basic and acidic residues.

Belongs to the ATG2 family.

It is found in the preautophagosomal structure membrane. It localises to the endoplasmic reticulum membrane. It carries out the reaction a 1,2-diacyl-sn-glycero-3-phosphocholine(in) = a 1,2-diacyl-sn-glycero-3-phosphocholine(out). The catalysed reaction is a 1,2-diacyl-sn-glycero-3-phospho-L-serine(in) = a 1,2-diacyl-sn-glycero-3-phospho-L-serine(out). The enzyme catalyses a 1,2-diacyl-sn-glycero-3-phosphoethanolamine(in) = a 1,2-diacyl-sn-glycero-3-phosphoethanolamine(out). Its function is as follows. Lipid transfer protein required for autophagosome completion and peroxisome degradation and peroxisome degradation. Tethers the edge of the isolation membrane (IM) to the endoplasmic reticulum (ER) and mediates direct lipid transfer from ER to IM for IM expansion. ATG2 binds to the ER exit site (ERES), which is the membrane source for autophagosome formation, using basic residues in its N-terminal region (NR) and to the expanding edge of the IM through its C-terminal region. The latter binding is assisted by an ATG18-PtdIns3P interaction. ATG2 then extracts phospholipids from the membrane source using its NR and transfers them to ATG9 to the IM through its predicted beta-sheet-rich structure for membrane expansion. This Pichia angusta (Yeast) protein is Autophagy-related protein 2 (ATG2).